Consider the following 472-residue polypeptide: Argininosuccinate lyase (472 aa).

It belongs to the lyase 1 family. Argininosuccinate lyase subfamily.

Its subcellular location is the cytoplasm. It carries out the reaction 2-(N(omega)-L-arginino)succinate = fumarate + L-arginine. The protein operates within amino-acid biosynthesis; L-arginine biosynthesis; L-arginine from L-ornithine and carbamoyl phosphate: step 3/3. The chain is Argininosuccinate lyase from Polynucleobacter asymbioticus (strain DSM 18221 / CIP 109841 / QLW-P1DMWA-1) (Polynucleobacter necessarius subsp. asymbioticus).